We begin with the raw amino-acid sequence, 471 residues long: UDP-N-acetylmuramate--L-alanine ligase (471 aa).

114–120 (GTHGKTT) serves as a coordination point for ATP.

The protein belongs to the MurCDEF family.

The protein resides in the cytoplasm. The enzyme catalyses UDP-N-acetyl-alpha-D-muramate + L-alanine + ATP = UDP-N-acetyl-alpha-D-muramoyl-L-alanine + ADP + phosphate + H(+). The protein operates within cell wall biogenesis; peptidoglycan biosynthesis. Functionally, cell wall formation. The protein is UDP-N-acetylmuramate--L-alanine ligase of Rhizobium johnstonii (strain DSM 114642 / LMG 32736 / 3841) (Rhizobium leguminosarum bv. viciae).